A 184-amino-acid polypeptide reads, in one-letter code: Peptide deformylase (184 aa).

Fe cation-binding residues include Cys92 and His134. Glu135 is a catalytic residue. His138 contributes to the Fe cation binding site.

The protein belongs to the polypeptide deformylase family. It depends on Fe(2+) as a cofactor.

The catalysed reaction is N-terminal N-formyl-L-methionyl-[peptide] + H2O = N-terminal L-methionyl-[peptide] + formate. Its function is as follows. Removes the formyl group from the N-terminal Met of newly synthesized proteins. Requires at least a dipeptide for an efficient rate of reaction. N-terminal L-methionine is a prerequisite for activity but the enzyme has broad specificity at other positions. The polypeptide is Peptide deformylase (Psychrobacter cryohalolentis (strain ATCC BAA-1226 / DSM 17306 / VKM B-2378 / K5)).